Here is a 554-residue protein sequence, read N- to C-terminus: MSGPQYGAQPGGYYNNNNNYPPPPPNSYQMNPMPTDGNYGQQPQYGYGGGPPPQQYGNGYGDGGYAPPQGPPPNGSKPPPTDGYGGPPPSYDEVFKVQKPKYNDWWAGLLFLATVAGFVAVSAISIHGYADNRSQNNGSLNGQRNTFGLTTHTIYLFVWVLICAIVLSYAYMWMARKFTKQFIYATGILNIVMGLVTALYMLSRKYWSGGIVFLIFVVLQALFFWSCRSRIPFSTLMLQTAIDVSKVHGHVYLVSAVGGVIGTLFAAYWAITLVAVYVKFEPDPNNAACRNAGGCSSGKVIGLIVFITFAGYWISEWLKNTIHTTVAGIYGSWYFNSRNYPTKVTRGALKRSLTYSFGSISLGSLFIAIINLIRQLAQAAQQNAAQEGDILGTILWCIFGCLIGILDWLVEFINRYAFCHIALYGKAYFAAAKDTWKMVKDRGIDALINECLIGPVLTFGATFVAYACGLIAYLYMVYTKPAYNDGGGFTPVVVAFAFLIGLQVCNVFTTPLTSGIDTIFVAMAWDPEVLMRDHPDLYHRMVQVYPHVQEAIHA.

Low complexity-rich tracts occupy residues 1–19 (MSGP…NNNN) and 27–45 (SYQM…QPQY). Residues 1–90 (MSGPQYGAQP…TDGYGGPPPS (90 aa)) are disordered. At 1–105 (MSGPQYGAQP…KVQKPKYNDW (105 aa)) the chain is on the cytoplasmic side. Residues 68–90 (PQGPPPNGSKPPPTDGYGGPPPS) are compositionally biased toward pro residues. The helical transmembrane segment at 106–126 (WAGLLFLATVAGFVAVSAISI) threads the bilayer. The Extracellular segment spans residues 127-153 (HGYADNRSQNNGSLNGQRNTFGLTTHT). N-linked (GlcNAc...) asparagine glycosylation is found at N132 and N137. The helical transmembrane segment at 154-174 (IYLFVWVLICAIVLSYAYMWM) threads the bilayer. Topologically, residues 175 to 181 (ARKFTKQ) are cytoplasmic. The chain crosses the membrane as a helical span at residues 182–202 (FIYATGILNIVMGLVTALYML). At 203–206 (SRKY) the chain is on the extracellular side. A helical membrane pass occupies residues 207 to 227 (WSGGIVFLIFVVLQALFFWSC). The Cytoplasmic portion of the chain corresponds to 228-255 (RSRIPFSTLMLQTAIDVSKVHGHVYLVS). The helical transmembrane segment at 256-276 (AVGGVIGTLFAAYWAITLVAV) threads the bilayer. The Extracellular portion of the chain corresponds to 277–297 (YVKFEPDPNNAACRNAGGCSS). Residues 298 to 318 (GKVIGLIVFITFAGYWISEWL) form a helical membrane-spanning segment. The Cytoplasmic segment spans residues 319-352 (KNTIHTTVAGIYGSWYFNSRNYPTKVTRGALKRS). A helical membrane pass occupies residues 353–373 (LTYSFGSISLGSLFIAIINLI). Topologically, residues 374 to 389 (RQLAQAAQQNAAQEGD) are extracellular. A helical membrane pass occupies residues 390 to 410 (ILGTILWCIFGCLIGILDWLV). Residues 411–451 (EFINRYAFCHIALYGKAYFAAAKDTWKMVKDRGIDALINEC) are Cytoplasmic-facing. Residues 452–472 (LIGPVLTFGATFVAYACGLIA) form a helical membrane-spanning segment. At 473–487 (YLYMVYTKPAYNDGG) the chain is on the extracellular side. A helical transmembrane segment spans residues 488–508 (GFTPVVVAFAFLIGLQVCNVF). Residues 509–554 (TTPLTSGIDTIFVAMAWDPEVLMRDHPDLYHRMVQVYPHVQEAIHA) lie on the Cytoplasmic side of the membrane.

It belongs to the CTL (choline transporter-like) family.

It is found in the cell membrane. Its function is as follows. Probably involved in transport through the plasma membrane. This chain is Protein PNS1 (pns-1), found in Neurospora crassa (strain ATCC 24698 / 74-OR23-1A / CBS 708.71 / DSM 1257 / FGSC 987).